The chain runs to 256 residues: Pro-opiomelanocortin (256 aa).

Residues 1–26 form the signal peptide; sequence MPRSCYSRSGTLLLALLLQISMEVRG. An intrachain disulfide couples C28 to C50. O-linked (GalNAc...) threonine glycosylation is present at T71. F87 carries the post-translational modification Phenylalanine amide. Residues 88-120 are disordered; the sequence is GRGNSSGASQKREEEAAAADPGFHGDGVEPGLR. N91 carries N-linked (GlcNAc...) asparagine glycosylation. Positions 100–122 are excised as a propeptide; the sequence is EEEAAAADPGFHGDGVEPGLRED. At S125 the chain carries N-acetylserine; in Corticotropin. V137 is subject to Valine amide. A Phosphoserine modification is found at S155.

It belongs to the POMC family. Specific enzymatic cleavages at paired basic residues yield the different active peptides. ACTH and MSH are produced by the pituitary gland.

The protein resides in the secreted. In terms of biological role, ACTH stimulates the adrenal glands to release cortisol. Its function is as follows. MSH (melanocyte-stimulating hormone) increases the pigmentation of skin by increasing melanin production in melanocytes. Beta-endorphin and Met-enkephalin are endogenous opiates. Functionally, stimulates the adrenal glands to release cortisol. In terms of biological role, anorexigenic peptide. Increases the pigmentation of skin by increasing melanin production in melanocytes. Its function is as follows. Increases the pigmentation of skin by increasing melanin production in melanocytes. Endogenous orexigenic opiate. Functionally, endogenous opiate. The chain is Pro-opiomelanocortin (POMC) from Cavia porcellus (Guinea pig).